The primary structure comprises 436 residues: EPS I polysaccharide export inner membrane protein EpsE (436 aa).

Helical transmembrane passes span 20 to 40 (VLGL…NILL), 49 to 69 (FGLF…LATG), 91 to 111 (LCAF…ALYL), 133 to 153 (AAIV…QYAM), 160 to 180 (ATIS…MGPI), 185 to 205 (LALT…LLVL), 234 to 254 (VLTT…LAAM), 261 to 281 (LALF…PATL), 307 to 327 (ALLF…LLAG), 341 to 361 (AASS…SVLL), 375 to 395 (FAMA…ALRL), and 396 to 416 (GFGA…LILF).

To E.coli bicyclomycin resistance protein (BCR).

Its subcellular location is the cell inner membrane. Its function is as follows. Probably involved in polymerization and/or export of exopolysaccharide EPS I which functions as a virulence factor. May play a role in export of EPS I or its intermediates across the membranes. The protein is EPS I polysaccharide export inner membrane protein EpsE (epsE) of Ralstonia solanacearum (Pseudomonas solanacearum).